Reading from the N-terminus, the 186-residue chain is uncharacterized protein (186 aa).

Positions Met-1–Gly-18 are cleaved as a signal peptide. Cys-19 carries N-palmitoyl cysteine lipidation. Cys-19 carries the S-diacylglycerol cysteine lipid modification.

The protein localises to the cell membrane. This is an uncharacterized protein from Salmonella typhimurium (strain LT2 / SGSC1412 / ATCC 700720).